The following is a 521-amino-acid chain: CDP-diacylglycerol--glycerol-3-phosphate 3-phosphatidyltransferase (521 aa).

91-98 (ASLYLGKS) contributes to the ATP binding site. PLD phosphodiesterase domains are found at residues 177 to 203 (GLGL…SNDY) and 419 to 457 (NGWS…TRRA). Active-site residues include His-182, Lys-184, and Asp-189.

It belongs to the CDP-alcohol phosphatidyltransferase class-II family.

It is found in the mitochondrion. It catalyses the reaction a CDP-1,2-diacyl-sn-glycerol + sn-glycerol 3-phosphate = a 1,2-diacyl-sn-glycero-3-phospho-(1'-sn-glycero-3'-phosphate) + CMP + H(+). The protein operates within phospholipid metabolism; phosphatidylglycerol biosynthesis; phosphatidylglycerol from CDP-diacylglycerol: step 1/2. In terms of biological role, essential for the viability of mitochondrial petite mutant. Catalyzes the committed step to the synthesis of the acidic phospholipids. This is CDP-diacylglycerol--glycerol-3-phosphate 3-phosphatidyltransferase (PGS1) from Saccharomyces cerevisiae (strain ATCC 204508 / S288c) (Baker's yeast).